Reading from the N-terminus, the 258-residue chain is tRNA pseudouridine synthase A (258 aa).

Aspartate 52 (nucleophile) is an active-site residue. Substrate is bound at residue tyrosine 110.

Belongs to the tRNA pseudouridine synthase TruA family. As to quaternary structure, homodimer.

It carries out the reaction uridine(38/39/40) in tRNA = pseudouridine(38/39/40) in tRNA. Functionally, formation of pseudouridine at positions 38, 39 and 40 in the anticodon stem and loop of transfer RNAs. This Francisella tularensis subsp. novicida (strain U112) protein is tRNA pseudouridine synthase A.